Reading from the N-terminus, the 90-residue chain is Small ribosomal subunit protein uS15c (90 aa).

The protein belongs to the universal ribosomal protein uS15 family. As to quaternary structure, part of the 30S ribosomal subunit.

The protein localises to the plastid. The protein resides in the chloroplast. The polypeptide is Small ribosomal subunit protein uS15c (rps15) (Acorus calamus (Sweet flag)).